The primary structure comprises 158 residues: Endoribonuclease YbeY (158 aa).

Histidine 121, histidine 125, and histidine 131 together coordinate Zn(2+).

The protein belongs to the endoribonuclease YbeY family. Zn(2+) serves as cofactor.

It is found in the cytoplasm. Its function is as follows. Single strand-specific metallo-endoribonuclease involved in late-stage 70S ribosome quality control and in maturation of the 3' terminus of the 16S rRNA. This Exiguobacterium sibiricum (strain DSM 17290 / CCUG 55495 / CIP 109462 / JCM 13490 / 255-15) protein is Endoribonuclease YbeY.